The sequence spans 58 residues: Small ribosomal subunit protein bS21 (58 aa).

The disordered stretch occupies residues 37–58 (FYDKPSVKKRAKSKAAAKYRGR). A compositionally biased stretch (basic residues) spans 43–58 (VKKRAKSKAAAKYRGR).

This sequence belongs to the bacterial ribosomal protein bS21 family.

The sequence is that of Small ribosomal subunit protein bS21 (rpsU) from Chlamydia muridarum (strain MoPn / Nigg).